The chain runs to 490 residues: Betaine aldehyde dehydrogenase (490 aa).

Residues threonine 26, isoleucine 27, and aspartate 93 each coordinate K(+). An NAD(+)-binding site is contributed by 150 to 152; it reads GAW. Lysine 162 serves as the catalytic Charge relay system. 176–179 lines the NAD(+) pocket; it reads KPSE. Valine 180 is a K(+) binding site. 230-233 is a binding site for NAD(+); the sequence is GVAS. Position 246 (leucine 246) interacts with K(+). Glutamate 252 serves as the catalytic Proton acceptor. 3 residues coordinate NAD(+): glycine 254, cysteine 286, and glutamate 387. Cysteine 286 serves as the catalytic Nucleophile. A Cysteine sulfenic acid (-SOH) modification is found at cysteine 286. K(+)-binding residues include lysine 457 and glycine 460. The Charge relay system role is filled by glutamate 464.

Belongs to the aldehyde dehydrogenase family. Dimer of dimers. The cofactor is K(+).

It carries out the reaction betaine aldehyde + NAD(+) + H2O = glycine betaine + NADH + 2 H(+). It participates in amine and polyamine biosynthesis; betaine biosynthesis via choline pathway; betaine from betaine aldehyde: step 1/1. Involved in the biosynthesis of the osmoprotectant glycine betaine. Catalyzes the irreversible oxidation of betaine aldehyde to the corresponding acid. The chain is Betaine aldehyde dehydrogenase from Escherichia coli (strain SMS-3-5 / SECEC).